A 30-amino-acid polypeptide reads, in one-letter code: Kalata-B17 (30 aa).

Positions 1 to 30 (GIPCAESCVYIPCTITALLGCKCKDQVCYN) form a cross-link, cyclopeptide (Gly-Asn). Cystine bridges form between C4-C21, C8-C23, and C13-C28.

In terms of processing, this is a cyclic peptide.

Its function is as follows. Probably participates in a plant defense mechanism. The chain is Kalata-B17 from Oldenlandia affinis.